The primary structure comprises 63 residues: Conotoxin PnMRCL-0111 (63 aa).

Residues 1–19 (MRCLPVFIVLLLLIVSAPG) form the signal peptide. A propeptide spanning residues 20-49 (FDARPKTEDDVPLSSFHDDLQRTVRTLLDI) is cleaved from the precursor. W62 carries the post-translational modification Tryptophan amide.

The protein belongs to the conotoxin T superfamily. Contains 2 disulfide bonds that can be either 'C1-C3, C2-C4' or 'C1-C4, C2-C3', since these disulfide connectivities have been observed for conotoxins with cysteine framework V (for examples, see AC P0DQQ7 and AC P81755). In terms of tissue distribution, expressed by the venom duct.

It localises to the secreted. The chain is Conotoxin PnMRCL-0111 from Conus pennaceus (Feathered cone).